Reading from the N-terminus, the 284-residue chain is Nucleoid occlusion protein (284 aa).

Residues 143–162 (EALAQRVGKSQSAIANKMRL) constitute a DNA-binding region (H-T-H motif).

This sequence belongs to the ParB family.

The protein resides in the cytoplasm. It is found in the nucleoid. In terms of biological role, effects nucleoid occlusion by binding relatively nonspecifically to DNA and preventing the assembly of the division machinery in the vicinity of the nucleoid, especially under conditions that disturb the cell cycle. It helps to coordinate cell division and chromosome segregation by preventing the formation of the Z ring through the nucleoid, which would cause chromosome breakage. This Listeria monocytogenes serovar 1/2a (strain ATCC BAA-679 / EGD-e) protein is Nucleoid occlusion protein.